The chain runs to 493 residues: 3-octaprenyl-4-hydroxybenzoate carboxy-lyase (493 aa).

Asparagine 172 is a Mn(2+) binding site. Prenylated FMN-binding positions include 175–177 (IYR), 189–191 (RWL), and 194–195 (RG). Glutamate 238 contacts Mn(2+). Catalysis depends on aspartate 287, which acts as the Proton donor.

It belongs to the UbiD family. Homohexamer. It depends on prenylated FMN as a cofactor. Mn(2+) is required as a cofactor.

Its subcellular location is the cell membrane. The enzyme catalyses a 4-hydroxy-3-(all-trans-polyprenyl)benzoate + H(+) = a 2-(all-trans-polyprenyl)phenol + CO2. The protein operates within cofactor biosynthesis; ubiquinone biosynthesis. Catalyzes the decarboxylation of 3-octaprenyl-4-hydroxy benzoate to 2-octaprenylphenol, an intermediate step in ubiquinone biosynthesis. This Shewanella denitrificans (strain OS217 / ATCC BAA-1090 / DSM 15013) protein is 3-octaprenyl-4-hydroxybenzoate carboxy-lyase.